The sequence spans 256 residues: tRNA (guanine-N(1)-)-methyltransferase (256 aa).

S-adenosyl-L-methionine contacts are provided by residues Gly-119 and 139–144 (IGDYVV).

Belongs to the RNA methyltransferase TrmD family. In terms of assembly, homodimer.

It localises to the cytoplasm. It catalyses the reaction guanosine(37) in tRNA + S-adenosyl-L-methionine = N(1)-methylguanosine(37) in tRNA + S-adenosyl-L-homocysteine + H(+). Specifically methylates guanosine-37 in various tRNAs. This Nitrosospira multiformis (strain ATCC 25196 / NCIMB 11849 / C 71) protein is tRNA (guanine-N(1)-)-methyltransferase.